A 421-amino-acid polypeptide reads, in one-letter code: D-amino acid dehydrogenase (421 aa).

3–17 (ILILGSGVVGTASAY) serves as a coordination point for FAD.

It belongs to the DadA oxidoreductase family. Requires FAD as cofactor.

It carries out the reaction a D-alpha-amino acid + A + H2O = a 2-oxocarboxylate + AH2 + NH4(+). It functions in the pathway amino-acid degradation; D-alanine degradation; NH(3) and pyruvate from D-alanine: step 1/1. Its function is as follows. Oxidative deamination of D-amino acids. This is D-amino acid dehydrogenase from Xanthobacter autotrophicus (strain ATCC BAA-1158 / Py2).